Here is a 150-residue protein sequence, read N- to C-terminus: Small ribosomal subunit protein uS11z (150 aa).

The residue at position 19 (S19) is a Phosphoserine.

This sequence belongs to the universal ribosomal protein uS11 family. In terms of assembly, interacts with AAK6.

The protein resides in the cytoplasm. The sequence is that of Small ribosomal subunit protein uS11z (RPS14A) from Arabidopsis thaliana (Mouse-ear cress).